We begin with the raw amino-acid sequence, 843 residues long: Glycogen phosphorylase, brain form (843 aa).

Residue alanine 2 is modified to N-acetylalanine. At serine 15 the chain carries Phosphoserine; by PHK; in form phosphorylase A. Residues aspartate 43, tyrosine 197, and arginine 310 each contribute to the AMP site. Tyrosine 197 carries the phosphotyrosine modification. Residue tyrosine 473 is modified to Phosphotyrosine. Residue lysine 569 participates in pyridoxal 5'-phosphate binding. Residues 677–678 (TG) form a pyridoxal 5'-phosphate region. Lysine 681 is modified (N6-(pyridoxal phosphate)lysine).

The protein belongs to the glycogen phosphorylase family. As to quaternary structure, homodimer. Dimers associate into a tetramer to form the enzymatically active phosphorylase A. The cofactor is pyridoxal 5'-phosphate. Phosphorylation of Ser-15 converts phosphorylase B (unphosphorylated) to phosphorylase A.

It catalyses the reaction [(1-&gt;4)-alpha-D-glucosyl](n) + phosphate = [(1-&gt;4)-alpha-D-glucosyl](n-1) + alpha-D-glucose 1-phosphate. With respect to regulation, activity of phosphorylase is controlled both by allosteric means (through the non-covalent binding of metabolites) and by covalent modification. Thus AMP allosterically activates, whereas ATP, ADP, and glucose-6-phosphate allosterically inhibit, phosphorylase B. In terms of biological role, glycogen phosphorylase that regulates glycogen mobilization. Phosphorylase is an important allosteric enzyme in carbohydrate metabolism. Enzymes from different sources differ in their regulatory mechanisms and in their natural substrates. However, all known phosphorylases share catalytic and structural properties. The sequence is that of Glycogen phosphorylase, brain form (PYGB) from Bos taurus (Bovine).